Here is a 1397-residue protein sequence, read N- to C-terminus: Protein RhsC (1397 aa).

Tandem repeats lie at residues 330 to 352 (NTQV…HRHT), 353 to 374 (GRPE…LNPA), 375 to 417 (GLSY…EHAD), 418 to 438 (GSVT…TDAA), 439 to 460 (GRTT…TTPD), 461 to 481 (GRAS…TGPD), 482 to 502 (GLEI…TAPD), 503 to 525 (GDIT…EDAT), 526 to 546 (GSRK…TDCS), 547 to 567 (GYVT…HREE), 568 to 588 (GLSQ…KDTQ), 589 to 609 (GHET…IAPD), 610 to 629 (GSRN…TTQG), 630 to 650 (GLTR…TSEN), 651 to 671 (GSHT…TGFD), 672 to 691 (GRTQ…SEDE), 692 to 711 (GLVT…RTVN), 712 to 734 (GETA…HISE), 735 to 758 (GHRV…LTVH), 808 to 828 (GDTP…LRSF), 829 to 850 (GRYE…HLNS), 851 to 871 (LLSD…ISSP), 872 to 894 (RQTR…TAAN), 895 to 930 (LDIR…NRIA), 931 to 959 (RDAH…VIRT), 960 to 984 (DDER…TQYA), 985 to 1019 (EPLV…MSLS), and 1162 to 1186 (GTTA…HQLQ). Residues 330 to 1186 (NTQVRSFTYD…LNEENPHQLQ (857 aa)) form a 28 X approximate tandem repeats region. A disordered region spans residues 1292 to 1312 (GGQDQRGESKGDGLWGPGKAS).

It belongs to the RHS family.

Functionally, rhs elements have a nonessential function. They may play an important role in the natural ecology of the cell. In Escherichia coli (strain K12), this protein is Protein RhsC (rhsC).